Reading from the N-terminus, the 324-residue chain is Adenine deaminase (324 aa).

Residues H11, H13, and H189 each coordinate Zn(2+). Catalysis depends on E192, which acts as the Proton donor. Residue D270 coordinates Zn(2+). A substrate-binding site is contributed by D271.

This sequence belongs to the metallo-dependent hydrolases superfamily. Adenosine and AMP deaminases family. Adenine deaminase type 2 subfamily. Requires Zn(2+) as cofactor.

The enzyme catalyses adenine + H2O + H(+) = hypoxanthine + NH4(+). In terms of biological role, catalyzes the hydrolytic deamination of adenine to hypoxanthine. Plays an important role in the purine salvage pathway and in nitrogen catabolism. The sequence is that of Adenine deaminase from Rhizobium meliloti (strain 1021) (Ensifer meliloti).